The chain runs to 574 residues: Proline--tRNA ligase (574 aa).

The protein belongs to the class-II aminoacyl-tRNA synthetase family. ProS type 1 subfamily. In terms of assembly, homodimer.

It localises to the cytoplasm. The catalysed reaction is tRNA(Pro) + L-proline + ATP = L-prolyl-tRNA(Pro) + AMP + diphosphate. Its function is as follows. Catalyzes the attachment of proline to tRNA(Pro) in a two-step reaction: proline is first activated by ATP to form Pro-AMP and then transferred to the acceptor end of tRNA(Pro). As ProRS can inadvertently accommodate and process non-cognate amino acids such as alanine and cysteine, to avoid such errors it has two additional distinct editing activities against alanine. One activity is designated as 'pretransfer' editing and involves the tRNA(Pro)-independent hydrolysis of activated Ala-AMP. The other activity is designated 'posttransfer' editing and involves deacylation of mischarged Ala-tRNA(Pro). The misacylated Cys-tRNA(Pro) is not edited by ProRS. In Hahella chejuensis (strain KCTC 2396), this protein is Proline--tRNA ligase.